Consider the following 489-residue polypeptide: Glycogen synthase (489 aa).

Position 20 (arginine 20) interacts with ADP-alpha-D-glucose.

The protein belongs to the glycosyltransferase 1 family. Bacterial/plant glycogen synthase subfamily.

It catalyses the reaction [(1-&gt;4)-alpha-D-glucosyl](n) + ADP-alpha-D-glucose = [(1-&gt;4)-alpha-D-glucosyl](n+1) + ADP + H(+). It participates in glycan biosynthesis; glycogen biosynthesis. Its function is as follows. Synthesizes alpha-1,4-glucan chains using ADP-glucose. This is Glycogen synthase from Chlorobium chlorochromatii (strain CaD3).